A 109-amino-acid chain; its full sequence is Nucleoid-associated protein LBUL_1514 (109 aa).

The protein belongs to the YbaB/EbfC family. In terms of assembly, homodimer.

Its subcellular location is the cytoplasm. The protein resides in the nucleoid. Functionally, binds to DNA and alters its conformation. May be involved in regulation of gene expression, nucleoid organization and DNA protection. This is Nucleoid-associated protein LBUL_1514 from Lactobacillus delbrueckii subsp. bulgaricus (strain ATCC BAA-365 / Lb-18).